The following is a 384-amino-acid chain: 4-hydroxy-3-methylbut-2-en-1-yl diphosphate synthase (flavodoxin) (384 aa).

Residues Cys-280, Cys-283, Cys-315, and Glu-322 each contribute to the [4Fe-4S] cluster site.

This sequence belongs to the IspG family. It depends on [4Fe-4S] cluster as a cofactor.

It catalyses the reaction (2E)-4-hydroxy-3-methylbut-2-enyl diphosphate + oxidized [flavodoxin] + H2O + 2 H(+) = 2-C-methyl-D-erythritol 2,4-cyclic diphosphate + reduced [flavodoxin]. Its pathway is isoprenoid biosynthesis; isopentenyl diphosphate biosynthesis via DXP pathway; isopentenyl diphosphate from 1-deoxy-D-xylulose 5-phosphate: step 5/6. In terms of biological role, converts 2C-methyl-D-erythritol 2,4-cyclodiphosphate (ME-2,4cPP) into 1-hydroxy-2-methyl-2-(E)-butenyl 4-diphosphate. The protein is 4-hydroxy-3-methylbut-2-en-1-yl diphosphate synthase (flavodoxin) of Frankia alni (strain DSM 45986 / CECT 9034 / ACN14a).